Consider the following 405-residue polypeptide: Imidazolonepropionase (405 aa).

Fe(3+) contacts are provided by histidine 73 and histidine 75. Positions 73 and 75 each coordinate Zn(2+). The 4-imidazolone-5-propanoate site is built by arginine 82, tyrosine 145, and histidine 178. Tyrosine 145 is a binding site for N-formimidoyl-L-glutamate. Histidine 243 lines the Fe(3+) pocket. Position 243 (histidine 243) interacts with Zn(2+). A 4-imidazolone-5-propanoate-binding site is contributed by glutamine 246. Aspartate 318 is a binding site for Fe(3+). A Zn(2+)-binding site is contributed by aspartate 318. Positions 320 and 322 each coordinate N-formimidoyl-L-glutamate. Threonine 323 is a binding site for 4-imidazolone-5-propanoate.

This sequence belongs to the metallo-dependent hydrolases superfamily. HutI family. Zn(2+) is required as a cofactor. The cofactor is Fe(3+).

It localises to the cytoplasm. It carries out the reaction 4-imidazolone-5-propanoate + H2O = N-formimidoyl-L-glutamate. It functions in the pathway amino-acid degradation; L-histidine degradation into L-glutamate; N-formimidoyl-L-glutamate from L-histidine: step 3/3. Catalyzes the hydrolytic cleavage of the carbon-nitrogen bond in imidazolone-5-propanoate to yield N-formimidoyl-L-glutamate. It is the third step in the universal histidine degradation pathway. This Brucella anthropi (strain ATCC 49188 / DSM 6882 / CCUG 24695 / JCM 21032 / LMG 3331 / NBRC 15819 / NCTC 12168 / Alc 37) (Ochrobactrum anthropi) protein is Imidazolonepropionase.